The following is a 107-amino-acid chain: Nucleoid-associated protein Hhal_0231 (107 aa).

2 disordered regions span residues 1-24 (MKGG…KAQE) and 82-107 (VQRE…KLPF). The segment covering 15–24 (MQEDMQKAQE) has biased composition (basic and acidic residues).

It belongs to the YbaB/EbfC family. Homodimer.

It is found in the cytoplasm. It localises to the nucleoid. Functionally, binds to DNA and alters its conformation. May be involved in regulation of gene expression, nucleoid organization and DNA protection. This is Nucleoid-associated protein Hhal_0231 from Halorhodospira halophila (strain DSM 244 / SL1) (Ectothiorhodospira halophila (strain DSM 244 / SL1)).